We begin with the raw amino-acid sequence, 389 residues long: MAVTKLNPSAAPFHCSRRHLFFAPPPPPPPPMPAYQYHATGACAAAAPPPFPFFATYSCASLPFHGHLYPPCGYQAQMGPAPPGAAFAKGVLAAAPPPPHGRPPHKLMVCKGAPTVTDVKLRAQARAAARVGVAAAVRGWRPAPATAGPPRMLVAAAPCGMLHPAAVARRRGMSKVYKPRKPQRAGRERSPSPSPVFTTRPMSPTPPMQKLKPAHTTVMVRNIPNKLTRSDMVRLLDDHCARENRRRGRGGEPRAEYDLVYVRMDFGMCNKERSSNMGYAFVNFTTAEAARGLQRALHGCRWKRSAFDSGKIIDIRAARIQGKDALVRHFGRTTYYECDTDEYLPAVFSPPRDGSTAGAGAPSPPAVKTVGIRVPPRPITLLTHRGNVN.

A compositionally biased stretch (basic residues) spans 170–184; that stretch reads RRGMSKVYKPRKPQR. Residues 170 to 211 form a disordered region; that stretch reads RRGMSKVYKPRKPQRAGRERSPSPSPVFTTRPMSPTPPMQKL. The region spanning 216–320 is the RRM domain; it reads TTVMVRNIPN…KIIDIRAARI (105 aa). The segment at 351–370 is disordered; the sequence is PRDGSTAGAGAPSPPAVKTV.

Its function is as follows. Probable RNA-binding protein that may play a role in growth regulation. In Oryza sativa subsp. japonica (Rice), this protein is Protein MEI2-like 7 (OML7).